A 146-amino-acid polypeptide reads, in one-letter code: UPF0260 protein SO_2573 (146 aa).

This sequence belongs to the UPF0260 family.

The polypeptide is UPF0260 protein SO_2573 (Shewanella oneidensis (strain ATCC 700550 / JCM 31522 / CIP 106686 / LMG 19005 / NCIMB 14063 / MR-1)).